Reading from the N-terminus, the 304-residue chain is Voltage-dependent anion channel-forming protein YneE (304 aa).

Transmembrane regions (helical) follow at residues 28–48, 50–70, 194–214, and 220–240; these read LLLN…YTHL, IKFT…FLGF, VLAG…TLIL, and LFCI…TPFI.

It belongs to the anion channel-forming bestrophin (TC 1.A.46) family.

The protein resides in the cell membrane. The chain is Voltage-dependent anion channel-forming protein YneE (yneE) from Escherichia coli O157:H7.